Reading from the N-terminus, the 301-residue chain is Lufaxin (301 aa).

Residues 1–23 (MNSINFLSIVGLISFGFIVAVKC) form the signal peptide. 4 cysteine pairs are disulfide-bonded: Cys52–Cys60, Cys78–Cys137, Cys102–Cys112, and Cys258–Cys265. Residue Asn262 is glycosylated (N-linked (GlcNAc...) asparagine).

Interacts with factor Xa. Associates with complement proconvertase C3b-B complex. Expressed in salivary glands.

Its subcellular location is the secreted. Sand fly salivary protein with antithrombotic, and anti-complement (alternative pathway) activities. Is a slow, tight, non-competitive, and reversible inhibitor of factor Xa (FXa, F10). Is specific for FXa (Kd=3.86 nM) and does not interact with non-activated FX, or all other enzymes tested. In addition, it blocks prothrombinase and increases both prothrombin time and activated partial thromboplastin time. It also prevents protease-activated receptor 2 (F2RL1, PAR2) activation by FXa. In vivo, it abrogates edema formation triggered by injection of FXa in the paw of mice. Moreover, it prevents FeCl(3)-induced carotid artery thrombus formation and prolongs activated partial thromboplastin time ex vivo, implying that it works as an anticoagulant in vivo. It also inhibits the early steps of the alternative pathway of complement by direct binding to the proconvertase C3b-B complex, by inhibiting activation of factor B and consequently the formation of the C3 convertase. This Lutzomyia longipalpis (Sand fly) protein is Lufaxin.